We begin with the raw amino-acid sequence, 721 residues long: Methionine--tRNA ligase (721 aa).

The short motif at 27–37 (PYANGQIHIGH) is the 'HIGH' region element. Positions 158, 161, 171, and 174 each coordinate Zn(2+). The 'KMSKS' region signature appears at 348–352 (KMSKS). Lysine 351 lines the ATP pocket. In terms of domain architecture, tRNA-binding spans 615 to 721 (DFAKIDLRIA…SGAKPGMRVK (107 aa)).

Belongs to the class-I aminoacyl-tRNA synthetase family. MetG type 1 subfamily. In terms of assembly, homodimer. Requires Zn(2+) as cofactor.

The protein localises to the cytoplasm. The catalysed reaction is tRNA(Met) + L-methionine + ATP = L-methionyl-tRNA(Met) + AMP + diphosphate. Is required not only for elongation of protein synthesis but also for the initiation of all mRNA translation through initiator tRNA(fMet) aminoacylation. The polypeptide is Methionine--tRNA ligase (Burkholderia vietnamiensis (strain G4 / LMG 22486) (Burkholderia cepacia (strain R1808))).